Here is a 1025-residue protein sequence, read N- to C-terminus: Multidrug resistance protein MdtC (1025 aa).

Helical transmembrane passes span 3–23 (FFAL…AITL), 333–353 (EVEQ…FLFL), 360–380 (IIPA…MYLC), 387–407 (LSLM…IVVL), 431–451 (VGFT…PLLL), 463–483 (FAVT…TLTP), 528–548 (LVGV…ISIP), 853–873 (VILI…LYES), 875–895 (VHPL…LLAL), 897–917 (LFNA…IGIV), 953–973 (PIMM…LSGG), and 984–1004 (ITIV…TPVV).

Belongs to the resistance-nodulation-cell division (RND) (TC 2.A.6) family. MdtC subfamily. Part of a tripartite efflux system composed of MdtA, MdtB and MdtC. MdtC forms a heteromultimer with MdtB.

It is found in the cell inner membrane. Functionally, the MdtABC tripartite complex confers resistance against novobiocin and deoxycholate. The polypeptide is Multidrug resistance protein MdtC (Escherichia coli (strain ATCC 8739 / DSM 1576 / NBRC 3972 / NCIMB 8545 / WDCM 00012 / Crooks)).